The chain runs to 152 residues: Ribosome maturation factor RimP (152 aa).

Belongs to the RimP family.

Its subcellular location is the cytoplasm. In terms of biological role, required for maturation of 30S ribosomal subunits. The chain is Ribosome maturation factor RimP from Desulfatibacillum aliphaticivorans.